The chain runs to 418 residues: MNPASGLPAVVIDNGTGYTKMGYAGNNDPSFIIPTTIATQSSKGKQTAASQKKGVEDLDFFIGDEAIANSKTYDMTNPVKHGQIENWTHMEQYWEHCVFKYLRCEPEDHYFLLTEPPLNAPENREFTAEIMFETFNVPGLYIAVQAVLALAASWTSKNAEKTLTGTVIDSGDGVTHVIPISEGYVIGSSIKHIPIAGRDISSYVQQIMREREPNIPPAESLEIAKRVKEQYSYVCPDIVKEFGKYDSEPDKWIKTINAQDSVTKKPFSYDVGYERFLGPELFFNPEIASSDYLTPLPKVVDDTIQSCPIDCRRGLYKNIVLSGGSTMFKDFGKRLQRDVKRSVDYRIKRSEELSGGKIKAVPLAVNVISHNMQRYAVWFGGSMLASTPEFYNVCHTKAQYDEIGPSICRFNTVIGGIN.

At Met-1 the chain carries N-acetylmethionine.

It belongs to the actin family. ARP3 subfamily. As to quaternary structure, component of the Arp2/3 complex composed of arpB/Arp2, arpC/Arp3, arcA/p41-arc, arcB/p34-arc, arcC/p21-arc, arcD/p20-arc and arcE/p16-arc. Interacts with carmil (via the region between the LRR domain and COOH-terminal proline-rich domain); carmil is required for Arp2/3-dependent actin nucleation. Arp2/3 complex, MyoB, MyoC, and the alpha and beta subunits of capping protein all form a larger complex with carmil.

The protein localises to the cytoplasm. It is found in the cytoskeleton. It localises to the cytosol. The protein resides in the cell cortex. Its subcellular location is the cell projection. The protein localises to the pseudopodium. Functions as ATP-binding component of the Arp2/3 complex which is involved in regulation of actin polymerization and together with an activating nucleation-promoting factor (NPF) mediates the formation of branched actin networks. Seems to contact the pointed end of the daughter actin filament. The Arp2/3 complex is involved in organizing the actin system in cell motility and chemotaxis, in phagocytosis and macropinocytosis, at late steps of endosome processing, and in mitosis. In concert with a group of other proteins, the Arp2/3 complex plays a general role in the rapid activation and adaptation of the actin system to its multiple functions. This Dictyostelium discoideum (Social amoeba) protein is Actin-related protein 3 (arpC).